The chain runs to 383 residues: Lipid-A-disaccharide synthase (383 aa).

This sequence belongs to the LpxB family.

It catalyses the reaction a lipid X + a UDP-2-N,3-O-bis[(3R)-3-hydroxyacyl]-alpha-D-glucosamine = a lipid A disaccharide + UDP + H(+). It functions in the pathway bacterial outer membrane biogenesis; LPS lipid A biosynthesis. Its function is as follows. Condensation of UDP-2,3-diacylglucosamine and 2,3-diacylglucosamine-1-phosphate to form lipid A disaccharide, a precursor of lipid A, a phosphorylated glycolipid that anchors the lipopolysaccharide to the outer membrane of the cell. The sequence is that of Lipid-A-disaccharide synthase from Myxococcus xanthus (strain DK1622).